We begin with the raw amino-acid sequence, 536 residues long: Arginine--tRNA ligase (536 aa).

Residues 119 to 129 (ANPTGFLHIGH) carry the 'HIGH' region motif.

Belongs to the class-I aminoacyl-tRNA synthetase family. In terms of assembly, monomer.

The protein resides in the cytoplasm. The enzyme catalyses tRNA(Arg) + L-arginine + ATP = L-arginyl-tRNA(Arg) + AMP + diphosphate. In Mycoplasma mobile (strain ATCC 43663 / 163K / NCTC 11711) (Mesomycoplasma mobile), this protein is Arginine--tRNA ligase.